Reading from the N-terminus, the 462-residue chain is Glycoprotein endo-alpha-1,2-mannosidase (462 aa).

Topologically, residues 1–9 (MAKFRRRTC) are cytoplasmic. A helical; Signal-anchor for type II membrane protein membrane pass occupies residues 10 to 30 (ILLSLFILFIFSLMMGLKMLW). The Lumenal segment spans residues 31-462 (PNAASFGPPF…YALDQQQPAS (432 aa)). The tract at residues 60 to 462 (DFQRSDRINM…YALDQQQPAS (403 aa)) is catalytic.

The protein belongs to the glycosyl hydrolase 99 family. Post-translationally, undergoes proteolytic cleavage in the C-terminal region.

Its subcellular location is the golgi apparatus membrane. It catalyses the reaction N-{alpha-Glc-(1-&gt;3)-alpha-Man-(1-&gt;2)-alpha-Man-(1-&gt;2)-alpha-Man-(1-&gt;3)-[alpha-Man-(1-&gt;2)-alpha-Man-(1-&gt;3)-[alpha-Man-(1-&gt;2)-alpha-Man-(1-&gt;6)]-alpha-Man-(1-&gt;6)]-beta-Man-(1-&gt;4)-beta-GlcNAc-(1-&gt;4)-beta-GlcNAc}-L-asparaginyl-[protein] + H2O = alpha-D-glucosyl-(1-&gt;3)-D-mannopyranose + N(4)-{alpha-D-Man-(1-&gt;2)-alpha-D-Man-(1-&gt;3)-[alpha-D-Man-(1-&gt;2)-alpha-D-Man-(1-&gt;3)-[alpha-D-Man-(1-&gt;2)-alpha-D-Man-(1-&gt;6)]-alpha-D-Man-(1-&gt;6)]-beta-D-Man-(1-&gt;4)-beta-D-GlaNAc-(1-&gt;4)-beta-D-GlcNAc}-L-asparaginyl-[protein] (N-glucan mannose isomer 8A1,2,3B1,2). This is Glycoprotein endo-alpha-1,2-mannosidase (Manea) from Mus musculus (Mouse).